The chain runs to 153 residues: Peptide deformylase (153 aa).

2 residues coordinate Fe cation: Cys87 and His129. Glu130 is an active-site residue. Position 133 (His133) interacts with Fe cation.

It belongs to the polypeptide deformylase family. Fe(2+) serves as cofactor.

It carries out the reaction N-terminal N-formyl-L-methionyl-[peptide] + H2O = N-terminal L-methionyl-[peptide] + formate. In terms of biological role, removes the formyl group from the N-terminal Met of newly synthesized proteins. Requires at least a dipeptide for an efficient rate of reaction. N-terminal L-methionine is a prerequisite for activity but the enzyme has broad specificity at other positions. The sequence is that of Peptide deformylase from Dictyoglomus thermophilum (strain ATCC 35947 / DSM 3960 / H-6-12).